The chain runs to 511 residues: MEKFEGYSEKHKSRQQYFVYPLLFQEYIYAFAHDYGLNGSEPVEIVSCNNKKFSSLLVKRLIIRMYQQNFLDNSVNNPNQDRLLDYKNYFYSEFYSQILSEGFAIVVEIPFSLRELSCPKEKEIPKFQNLRSIHSIFPFLEDKFLHLDYLSHIEIPYPIHLEILVQLLQYRIQDVPSLHLLRFFLNYYSNWNSFITSMKSIFYFQKENKRLFKFLYNSYVSEYEFFLLFLRKQSSCLPLASSGTFLERIHFSRKMEHFGIMYPGFSRKTLWFFMDPLMHYVRYQGKAILASKGSFFLKKKWKCYLINFWQYYFFFWTQPRRIHINQLANSCFDFMGYLSSVPKSPLLVRNQMLENSFLIDTRMKKFDTIVPATLLIGYLSKAQFCTGSGHPISKPIWTDLSDWDILDRFGRICRNLFHYHSGSSKKRTLYRLKYILRLSCARTLARKHKSTVRTFMQRLGSAFLEEFFTEEEQVFSLMFTKTTLFSFCGSHTERIWYLDIIRINDLVNPLN.

Belongs to the intron maturase 2 family. MatK subfamily.

It is found in the plastid. The protein resides in the chloroplast. Usually encoded in the trnK tRNA gene intron. Probably assists in splicing its own and other chloroplast group II introns. The chain is Maturase K from Hordeum jubatum (Foxtail barley).